Here is an 889-residue protein sequence, read N- to C-terminus: Alanine--tRNA ligase (889 aa).

His574, His578, Cys676, and His680 together coordinate Zn(2+).

The protein belongs to the class-II aminoacyl-tRNA synthetase family. It depends on Zn(2+) as a cofactor.

It localises to the cytoplasm. It catalyses the reaction tRNA(Ala) + L-alanine + ATP = L-alanyl-tRNA(Ala) + AMP + diphosphate. Its function is as follows. Catalyzes the attachment of alanine to tRNA(Ala) in a two-step reaction: alanine is first activated by ATP to form Ala-AMP and then transferred to the acceptor end of tRNA(Ala). Also edits incorrectly charged Ser-tRNA(Ala) and Gly-tRNA(Ala) via its editing domain. The sequence is that of Alanine--tRNA ligase from Thermobifida fusca (strain YX).